We begin with the raw amino-acid sequence, 397 residues long: Proteinase-activated receptor 2 (397 aa).

A signal peptide spans 1-25 (MRSLSLAWLLGGITLLAASASCNRT). N23 carries an N-linked (GlcNAc...) asparagine glycan. A propeptide spans 26-36 (VNAPGPNSKGR) (removed for receptor activation). Residues 37–71 (SLIGRLDTPPPITGKGAPVEPGFSVDEFSASVLTG) are Extracellular-facing. A helical transmembrane segment spans residues 72 to 101 (KLTTVFLPVIYIIVFVIGLPSNGMALWVFF). The Cytoplasmic portion of the chain corresponds to 102 to 108 (FRTKKKH). The helical transmembrane segment at 109–137 (PAVIYMANLALADLLSVIWFPLKISYHLH) threads the bilayer. The Extracellular portion of the chain corresponds to 138–149 (GNDWTYGDALCK). A disulfide bridge connects residues C148 and C226. The helical transmembrane segment at 150-177 (VLIGFFYGNMYCSILFMTCLSVQRYWVI) threads the bilayer. Over 178–183 (VNPMGH) the chain is Cytoplasmic. The helical transmembrane segment at 184–211 (SRKRANIAVGVSLAIWLLIFLVTIPLYV) threads the bilayer. The Extracellular portion of the chain corresponds to 212–235 (MRQTIYIPALNITTCHDVLPEEVL). N-linked (GlcNAc...) asparagine glycosylation is present at N222. The chain crosses the membrane as a helical span at residues 236-269 (VGDMFSYFLSLAIGVFLFPALLTASAYVLMIKTL). The Cytoplasmic portion of the chain corresponds to 270–277 (RSSAMDEH). Residues 278–317 (SEKKRRRAIRLIITVLSMYFICFAPSNVLLVVHYFLIKSQ) form a helical membrane-spanning segment. Over 318 to 323 (RQSHVY) the chain is Extracellular. Residues 324 to 347 (ALYLVALCLSTLNSCIDPFVYYFV) form a helical membrane-spanning segment. Topologically, residues 348–397 (SKDFRDQARNALLCRSVRTVKRMQISLTSNKFSRKSSSYSSSSTSVKTSY) are cytoplasmic. C361 is lipidated: S-palmitoyl cysteine.

This sequence belongs to the G-protein coupled receptor 1 family. As to quaternary structure, interacts with TLR4, COPS5 and TMED2. Interacts with GNAQ, GNA11, GNA12, GNA13 and GNA14. A proteolytic cleavage generates a new N-terminus that functions as a tethered ligand. Activating serine proteases include trypsin, mast cell tryptase, coagulation factors VII and Xa, myeloblastin/PRTN3 and membrane-type serine protease 1/ST14. Proposed subsequent cleavage by serine proteases is leading to receptor deactivation and include neutrophil elastase and cathepsin G. At least in part, implicated proteases are also shown to activate the receptor; the glycosylation status of the receptor is thought to contribute to the difference. In terms of processing, N-glycosylated and sialylated. Post-translationally, multiple phosphorylated on serine and threonine residues in the cytoplasmic region upon receptor activation; required for receptor desensitization and recruitment of beta-arrestin. Monoubiquitinated by Cbl at the plasma membrane and in early endosomes; not required for receptor endocytosis but for translocation to late endosomes or lysosomes. Deubiquitination involves Stambp and Usp8; required for lysosomal trafficking and receptor degradation.

The protein localises to the cell membrane. Functionally, receptor for trypsin and trypsin-like enzymes coupled to G proteins. Its function is mediated through the activation of several signaling pathways including phospholipase C (PLC), intracellular calcium, mitogen-activated protein kinase (MAPK), I-kappaB kinase/NF-kappaB and Rho. Can also be transactivated by cleaved F2R/PAR1. Involved in modulation of inflammatory responses and regulation of innate and adaptive immunity, and acts as a sensor for proteolytic enzymes generated during infection. Generally is promoting inflammation. Can signal synergistically with TLR4 and probably TLR2 in inflammatory responses and modulates Tlr3 signaling. Has a protective role in establishing the endothelial barrier; the activity involves coagulation factor X. Regulates endothelial cell barrier integrity during neutrophil extravasation, probably following proteolytic cleavage by PRTN3. Proposed to have a bronchoprotective role in airway epithelium, but also shown to compromise the airway epithelial barrier by interrupting E-cadherin adhesion. Involved in the regulation of vascular tone; activation results in hypotension presumably mediated by vasodilation. Associates with a subset of G proteins alpha subunits such as GNAQ, GNA11, GNA14, GNA12 and GNA13, but probably not with G(o)-alpha, G(i) subunit alpha-1 and G(i) subunit alpha-2. Believed to be a class B receptor which internalizes as a complex with arrestin and traffic with it to endosomal vesicles, presumably as desensitized receptor, for extended periods of time. Mediates inhibition of TNF-alpha stimulated JNK phosphorylation via coupling to G GNAQ and GNA11; the function involves dissociation of RIPK1 and Tradd from TNFR1. Mediates phosphorylation of nuclear factor NF-kappa-B RELA subunit at 'Ser-536'; the function involves Ikbkb and is predominantly independent of G proteins. Involved in cellular migration. Involved in cytoskeletal rearrangement and chemotaxis through beta-arrestin-promoted scaffolds; the function is independent of GNAQ and GNA11 and involves promotion of cofilin dephosphorylation and actin filament severing. Induces redistribution of COPS5 from the plasma membrane to the cytosol and activation of the JNK cascade is mediated by Cops5. Involved in the recruitment of leukocytes to the sites of inflammation and is the major PAR receptor capable of modulating eosinophil function such as pro-inflammatory cytokine secretion, superoxide production and degranulation. During inflammation promotes dendritic cell maturation, trafficking to the lymph nodes and subsequent T-cell activation. Involved in antimicrobial response of innate immune cells; activation enhances phagocytosis of Gram-positive and killing of Gram-negative bacteria. Acts synergistically with interferon-gamma in enhancing antiviral responses. Probably mediates activation of pro-inflammatory and pro-fibrotic responses in fibroblasts, triggered by coagulation factor Xa (F10). Probably mediates activation of barrier protective signaling responses in endothelial cells, triggered by coagulation factor Xa (F10). The protein is Proteinase-activated receptor 2 (F2rl1) of Rattus norvegicus (Rat).